A 141-amino-acid polypeptide reads, in one-letter code: U-scoloptoxin(17)-Er3a (141 aa).

The first 21 residues, 1–21 (MKSTFALVFGILMVIAHLSFA), serve as a signal peptide directing secretion.

Belongs to the scoloptoxin-17 family. Post-translationally, contains 3 disulfide bonds. As to expression, expressed by the venom gland.

Its subcellular location is the secreted. The chain is U-scoloptoxin(17)-Er3a from Ethmostigmus rubripes (Giant centipede).